The following is a 246-amino-acid chain: Pyridoxine 5'-phosphate synthase (246 aa).

A 3-amino-2-oxopropyl phosphate-binding site is contributed by asparagine 12. 14-15 (DH) lines the 1-deoxy-D-xylulose 5-phosphate pocket. Arginine 23 serves as a coordination point for 3-amino-2-oxopropyl phosphate. Histidine 48 acts as the Proton acceptor in catalysis. 1-deoxy-D-xylulose 5-phosphate is bound by residues arginine 50 and histidine 55. The active-site Proton acceptor is the glutamate 75. Threonine 105 is a binding site for 1-deoxy-D-xylulose 5-phosphate. The Proton donor role is filled by histidine 196. Residues glycine 197 and 218–219 (GH) each bind 3-amino-2-oxopropyl phosphate.

It belongs to the PNP synthase family. In terms of assembly, homooctamer; tetramer of dimers.

It localises to the cytoplasm. The enzyme catalyses 3-amino-2-oxopropyl phosphate + 1-deoxy-D-xylulose 5-phosphate = pyridoxine 5'-phosphate + phosphate + 2 H2O + H(+). It participates in cofactor biosynthesis; pyridoxine 5'-phosphate biosynthesis; pyridoxine 5'-phosphate from D-erythrose 4-phosphate: step 5/5. In terms of biological role, catalyzes the complicated ring closure reaction between the two acyclic compounds 1-deoxy-D-xylulose-5-phosphate (DXP) and 3-amino-2-oxopropyl phosphate (1-amino-acetone-3-phosphate or AAP) to form pyridoxine 5'-phosphate (PNP) and inorganic phosphate. This chain is Pyridoxine 5'-phosphate synthase, found in Thioalkalivibrio sulfidiphilus (strain HL-EbGR7).